A 488-amino-acid chain; its full sequence is L-arabinose isomerase 1 (488 aa).

Mn(2+)-binding residues include Glu306, Glu331, His348, and His447.

It belongs to the arabinose isomerase family. The cofactor is Mn(2+).

The enzyme catalyses beta-L-arabinopyranose = L-ribulose. The protein operates within carbohydrate degradation; L-arabinose degradation via L-ribulose; D-xylulose 5-phosphate from L-arabinose (bacterial route): step 1/3. Catalyzes the conversion of L-arabinose to L-ribulose. This is L-arabinose isomerase 1 from Clostridium acetobutylicum (strain ATCC 824 / DSM 792 / JCM 1419 / IAM 19013 / LMG 5710 / NBRC 13948 / NRRL B-527 / VKM B-1787 / 2291 / W).